The sequence spans 660 residues: MNPDLRRERDSASFNPELLTHILDGSPEKTRRRREIENMILNDPDFQHEDLNFLTRSQRYEVAVRKSAIMVKKMREFGIADPDEIMWFKKLHLVNFVEPVGLNYSMFIPTLLNQGTTAQKEKWLLSSKGLQIIGTYAQTEMGHGTHLRGLETTATYDPETQEFILNSPTVTSIKWWPGGLGKTSNHAIVLAQLITKGKCYGLHAFIVPIREIGTHKPLPGITVGDIGPKFGYDEIDNGYLKMDNHRIPRENMLMKYAQVKPDGTYVKPLSNKLTYGTMVFVRSFLVGEAARALSKACTIAIRYSAVRHQSEIKPGEPEPQILDFQTQQYKLFPLLATAYAFQFVGAYMKETYHRINEGIGQGDLSELPELHALTAGLKAFTSWTANTGIEACRMACGGHGYSHCSGLPNIYVNFTPSCTFEGENTVMMLQTARFLMKSYDQVHSGKLVCGMVSYLNDLPSQRIQPQQVAVWPTMVDINSPESLTEAYKLRAARLVEIAAKNLQKEVIHRKSKEVAWNLTSVDLVRASEAHCHYVVVKLFSEKLLKIQDKAIQAVLRSLCLLYSLYGISQNAGDFLQGSIMTEPQITQVNQRVKELLTLIRSDAVALVDAFDFQDVTLGSVLGRYDGNVYENLFEWAKNSPLNKAEVHESYKHLKSLQSKL.

Ser-26 is modified (phosphoserine). N6-succinyllysine occurs at positions 89 and 90. Residues Thr-139 and Gly-178 each contribute to the FAD site. Lys-216 carries the N6-acetyllysine modification. Lys-241 carries the N6-succinyllysine modification. Lys-255, Lys-267, and Lys-272 each carry N6-acetyllysine. Lys-349 carries the post-translational modification N6-succinyllysine. Glu-421 acts as the Proton acceptor in catalysis. An N6-acetyllysine; alternate mark is found at Lys-437 and Lys-446. Lys-437 and Lys-446 each carry N6-succinyllysine; alternate. 2 positions are modified to N6-acetyllysine: Lys-500 and Lys-504. An N6-acetyllysine; alternate modification is found at Lys-512. Lys-512 carries the N6-succinyllysine; alternate modification. Residue Lys-542 is modified to N6-succinyllysine. Lys-637 is modified (N6-acetyllysine; alternate). Residue Lys-637 is modified to N6-succinyllysine; alternate. Lys-643 carries the N6-succinyllysine modification. A Phosphoserine modification is found at Ser-649. Lys-651 is subject to N6-acetyllysine. Lys-654 is subject to N6-succinyllysine. The Microbody targeting signal signature appears at 658–660 (SKL).

It belongs to the acyl-CoA oxidase family. Homodimer. Interacts with LONP2. The cofactor is FAD. In terms of tissue distribution, widely expressed with highest levels of isoform 1 and isoform 2 detected in testis. Isoform 1 is expressed at higher levels than isoform 2 in liver and kidney while isoform 2 levels are higher in brain, lung, muscle, white adipose tissue and testis. Levels are almost equal in heart.

The protein localises to the peroxisome. The catalysed reaction is a 2,3-saturated acyl-CoA + O2 = a (2E)-enoyl-CoA + H2O2. It catalyses the reaction hexadecanoyl-CoA + O2 = (2E)-hexadecenoyl-CoA + H2O2. The enzyme catalyses dodecanoyl-CoA + O2 = (2E)-dodecenoyl-CoA + H2O2. It carries out the reaction octanoyl-CoA + O2 = (2E)-octenoyl-CoA + H2O2. The catalysed reaction is decanoyl-CoA + O2 = (2E)-decenoyl-CoA + H2O2. It catalyses the reaction tetradecanoyl-CoA + O2 = (2E)-tetradecenoyl-CoA + H2O2. The enzyme catalyses hexadecanedioyl-CoA + O2 = (2E)-hexadecenedioyl-CoA + H2O2. It carries out the reaction (5Z,8Z,11Z,14Z,17Z)-eicosapentaenoyl-CoA + O2 = (2E,5Z,8Z,11Z,14Z,17Z)-icosahexaenoyl-CoA + H2O2. The catalysed reaction is tetracosanoyl-CoA + O2 = (2E)-tetracosenoyl-CoA + H2O2. It catalyses the reaction glutaryl-CoA + O2 = (2E)-glutaconyl-CoA + H2O2. The enzyme catalyses hexanoyl-CoA + O2 = (2E)-hexenoyl-CoA + H2O2. It carries out the reaction octadecanoyl-CoA + O2 = (2E)-octadecenoyl-CoA + H2O2. The catalysed reaction is (6Z,9Z,12Z,15Z,18Z,21Z)-tetracosahexaenoyl-CoA + O2 = (2E,6Z,9Z,12Z,15Z,18Z,21Z)-tetracosaheptaenoyl-CoA + H2O2. Its pathway is lipid metabolism; peroxisomal fatty acid beta-oxidation. Involved in the initial and rate-limiting step of peroxisomal beta-oxidation of straight-chain saturated and unsaturated very-long-chain fatty acids. Catalyzes the desaturation of fatty acyl-CoAs such as palmitoyl-CoA (hexadecanoyl-CoA) to 2-trans-enoyl-CoAs ((2E)-enoyl-CoAs) such as (2E)-hexadecenoyl-CoA, and donates electrons directly to molecular oxygen (O(2)), thereby producing hydrogen peroxide (H(2)O(2)). In terms of biological role, shows highest activity against medium-chain fatty acyl-CoAs. Shows optimum activity with a chain length of 10 carbons (decanoyl-CoA) in vitro. Functionally, is active against a much broader range of substrates and shows activity towards long-chain fatty acyl-CoAs. The protein is Peroxisomal acyl-coenzyme A oxidase 1 of Homo sapiens (Human).